A 456-amino-acid polypeptide reads, in one-letter code: Esterase MT1326 (456 aa).

LysM domains lie at 3–50, 54–101, and 105–152; these read STHA…RLIM, TRYT…RLIM, and TRYT…VLVI. Catalysis depends on residues Ser294, Asp391, and His425.

The protein belongs to the AB hydrolase superfamily.

The protein resides in the secreted. It is found in the cell wall. The catalysed reaction is a fatty acid ester + H2O = an aliphatic alcohol + a fatty acid + H(+). Functionally, exhibits lipolytic activity with medium chain length esters as optimum substrates. The chain is Esterase MT1326 from Mycobacterium tuberculosis (strain CDC 1551 / Oshkosh).